A 1119-amino-acid chain; its full sequence is Translation initiation factor IF-2 (1119 aa).

Disordered stretches follow at residues 64–463 (SIKK…TSGY) and 477–507 (RPKK…RQRQ). Basic and acidic residues predominate over residues 70–102 (IKKDNYKQNKEDKSSLISSVEEKPFKDNPEKKP). Polar residues-rich tracts occupy residues 116-153 (IISN…QNLN) and 182-212 (KNTT…KPDQ). The segment covering 213 to 224 (NSSKSKTKNINN) has biased composition (low complexity). Composition is skewed to polar residues over residues 242–257 (NKQN…QTVP), 281–297 (FNRQ…SSNK), 319–328 (FNRQVNTNRS), and 375–387 (QVIN…NSET). Basic and acidic residues predominate over residues 421-435 (GKTDWDDSAKLEALR). A compositionally biased stretch (basic residues) spans 493–507 (KQFKKKKKETTRQRQ). Residues 610–782 (KRPPVITVMG…ILLVSEVEDL (173 aa)) enclose the tr-type G domain. The tract at residues 619 to 626 (GHVDHGKT) is G1. Position 619 to 626 (619 to 626 (GHVDHGKT)) interacts with GTP. The interval 644-648 (GITQH) is G2. Positions 669–672 (DTPG) are G3. Residues 669 to 673 (DTPGH) and 723 to 726 (NKID) each bind GTP. Residues 723-726 (NKID) are G4. Residues 759–761 (SAI) form a G5 region.

The protein belongs to the TRAFAC class translation factor GTPase superfamily. Classic translation factor GTPase family. IF-2 subfamily.

The protein resides in the cytoplasm. One of the essential components for the initiation of protein synthesis. Protects formylmethionyl-tRNA from spontaneous hydrolysis and promotes its binding to the 30S ribosomal subunits. Also involved in the hydrolysis of GTP during the formation of the 70S ribosomal complex. This Prochlorococcus marinus (strain MIT 9215) protein is Translation initiation factor IF-2.